Consider the following 423-residue polypeptide: Probable sucrose-phosphatase 1 (423 aa).

It belongs to the sucrose phosphatase family. Homodimer. It depends on Mg(2+) as a cofactor.

The enzyme catalyses sucrose 6(F)-phosphate + H2O = sucrose + phosphate. It functions in the pathway glycan biosynthesis; sucrose biosynthesis; sucrose from D-fructose 6-phosphate and UDP-alpha-D-glucose: step 2/2. Functionally, catalyzes the final step of sucrose synthesis. The polypeptide is Probable sucrose-phosphatase 1 (SPP1) (Arabidopsis thaliana (Mouse-ear cress)).